A 519-amino-acid chain; its full sequence is Glycogen synthase (519 aa).

Residues 1 to 40 are disordered; it reads MISAAVEPHVDAFKPDNREPLTPDFATTGKAPGAQRQHNP. Residues 8-21 show a composition bias toward basic and acidic residues; that stretch reads PHVDAFKPDNREPL. Lys-57 is an ADP-alpha-D-glucose binding site.

This sequence belongs to the glycosyltransferase 1 family. Bacterial/plant glycogen synthase subfamily.

It catalyses the reaction [(1-&gt;4)-alpha-D-glucosyl](n) + ADP-alpha-D-glucose = [(1-&gt;4)-alpha-D-glucosyl](n+1) + ADP + H(+). It participates in glycan biosynthesis; glycogen biosynthesis. Its function is as follows. Synthesizes alpha-1,4-glucan chains using ADP-glucose. The polypeptide is Glycogen synthase (Pseudomonas putida (strain ATCC 47054 / DSM 6125 / CFBP 8728 / NCIMB 11950 / KT2440)).